Reading from the N-terminus, the 292-residue chain is MIAGSMVALVTPMDAQGRLDWGSLGKLVDFHLENGTHAIVAVGTTGESATLSVEEHIEVIEFVVKRVAGRIPVIAGTGANSTSEAVHLTQNAKDAGADACLLVVPYYNKPTQEGLYLHFKHIAEAVDIPQILYNVPGRTSCDMQAETVIRLSTVPNIIGIKEATGDLARAKAILDGVSKDFIVMSGDDPTAVELILLGGKGNISVTANVAPREMADLCEAALEGNAEKARAINEKLMPLHKDLFCEANPIPVKYALVEMGLMQKGIRLPLTWLSEGCHEKVRTALRQSGVLV.

Thr-45 is a binding site for pyruvate. Tyr-133 serves as the catalytic Proton donor/acceptor. Lys-161 acts as the Schiff-base intermediate with substrate in catalysis. Ile-203 serves as a coordination point for pyruvate.

This sequence belongs to the DapA family. In terms of assembly, homodimer.

Its subcellular location is the cytoplasm. The enzyme catalyses L-aspartate 4-semialdehyde + pyruvate = (2S,4S)-4-hydroxy-2,3,4,5-tetrahydrodipicolinate + H2O + H(+). It participates in amino-acid biosynthesis; L-lysine biosynthesis via DAP pathway; (S)-tetrahydrodipicolinate from L-aspartate: step 3/4. Catalyzes the condensation of (S)-aspartate-beta-semialdehyde [(S)-ASA] and pyruvate to 4-hydroxy-tetrahydrodipicolinate (HTPA). This chain is 4-hydroxy-tetrahydrodipicolinate synthase, found in Pseudomonas putida (strain W619).